The sequence spans 369 residues: tRNA-specific 2-thiouridylase MnmA (369 aa).

ATP is bound by residues 7–14 and Met33; that span reads GISGGVDS. The segment at 93 to 95 is interaction with target base in tRNA; it reads NPD. Cys98 (nucleophile) is an active-site residue. Cys98 and Cys195 are joined by a disulfide. Gly123 is an ATP binding site. The interaction with tRNA stretch occupies residues 145 to 147; that stretch reads KDQ. Cys195 acts as the Cysteine persulfide intermediate in catalysis. Residues 307-308 are interaction with tRNA; sequence RY.

This sequence belongs to the MnmA/TRMU family. Interacts with TusE.

Its subcellular location is the cytoplasm. It carries out the reaction S-sulfanyl-L-cysteinyl-[protein] + uridine(34) in tRNA + AH2 + ATP = 2-thiouridine(34) in tRNA + L-cysteinyl-[protein] + A + AMP + diphosphate + H(+). Functionally, catalyzes the 2-thiolation of uridine at the wobble position (U34) of tRNA(Lys), tRNA(Glu) and tRNA(Gln), leading to the formation of s(2)U34, the first step of tRNA-mnm(5)s(2)U34 synthesis. Sulfur is provided by IscS, via a sulfur-relay system. Binds ATP and its substrate tRNAs. The chain is tRNA-specific 2-thiouridylase MnmA from Blochmanniella floridana.